The following is a 102-amino-acid chain: Large ribosomal subunit protein bL21 (102 aa).

It belongs to the bacterial ribosomal protein bL21 family. Part of the 50S ribosomal subunit. Contacts protein L20.

In terms of biological role, this protein binds to 23S rRNA in the presence of protein L20. The sequence is that of Large ribosomal subunit protein bL21 from Campylobacter lari (strain RM2100 / D67 / ATCC BAA-1060).